We begin with the raw amino-acid sequence, 80 residues long: Large ribosomal subunit protein bL31B (80 aa).

The protein belongs to the bacterial ribosomal protein bL31 family. Type B subfamily. In terms of assembly, part of the 50S ribosomal subunit.

The chain is Large ribosomal subunit protein bL31B from Exiguobacterium sp. (strain ATCC BAA-1283 / AT1b).